We begin with the raw amino-acid sequence, 727 residues long: Glucans biosynthesis glucosyltransferase H (727 aa).

A disordered region spans residues 17-41 (GSAMPNERPGPMEPQSLSQMPEGFP). A run of 6 helical transmembrane segments spans residues 58-80 (FFVV…AVFS), 95-117 (FAIN…LLLL), 407-429 (GIMA…MLAL), 457-479 (ALRL…VLLL), 499-521 (VLFE…CGAV), and 572-594 (LLAW…AWTG).

It belongs to the glycosyltransferase 2 family. OpgH subfamily.

The protein resides in the cell inner membrane. It participates in glycan metabolism; osmoregulated periplasmic glucan (OPG) biosynthesis. Its function is as follows. Involved in the biosynthesis of osmoregulated periplasmic glucans (OPGs). The polypeptide is Glucans biosynthesis glucosyltransferase H (Shewanella oneidensis (strain ATCC 700550 / JCM 31522 / CIP 106686 / LMG 19005 / NCIMB 14063 / MR-1)).